The sequence spans 216 residues: Molybdenum cofactor guanylyltransferase (216 aa).

GTP-binding positions include 16–18, K28, N57, D73, and D108; that span reads LAG. D108 provides a ligand contact to Mg(2+).

This sequence belongs to the MobA family. As to quaternary structure, monomer. It depends on Mg(2+) as a cofactor.

It localises to the cytoplasm. The enzyme catalyses Mo-molybdopterin + GTP + H(+) = Mo-molybdopterin guanine dinucleotide + diphosphate. Its function is as follows. Transfers a GMP moiety from GTP to Mo-molybdopterin (Mo-MPT) cofactor (Moco or molybdenum cofactor) to form Mo-molybdopterin guanine dinucleotide (Mo-MGD) cofactor. This chain is Molybdenum cofactor guanylyltransferase, found in Rhizobium rhizogenes (strain K84 / ATCC BAA-868) (Agrobacterium radiobacter).